We begin with the raw amino-acid sequence, 564 residues long: Isopullulanase (564 aa).

A signal peptide spans 1–19 (MRSTGYLLTLSAAFQVAQA). Residues asparagine 24, asparagine 94, asparagine 115, asparagine 138, asparagine 186, asparagine 210, asparagine 305, asparagine 381, asparagine 448, asparagine 455, asparagine 460, asparagine 486, asparagine 491, asparagine 503, and asparagine 535 are each glycosylated (N-linked (GlcNAc...) asparagine).

N-glycosylated.

Its subcellular location is the secreted. It catalyses the reaction Hydrolysis of pullulan to isopanose (6-alpha-maltosylglucose).. Its function is as follows. Hydrolyzes pullulan, a linear polymer which is composed of maltotriose units with alpha-1,6 glucosidic linkages, to produce isopanose (Glca1-4Glca1-6Glc). This Aspergillus niger protein is Isopullulanase (ipuA).